Reading from the N-terminus, the 190-residue chain is dCTP deaminase (190 aa).

DCTP contacts are provided by residues 111-116 (KSTYAR), 135-137 (TLE), Gln-156, Tyr-172, and Gln-182. Glu-137 acts as the Proton donor/acceptor in catalysis.

The protein belongs to the dCTP deaminase family. In terms of assembly, homotrimer.

The enzyme catalyses dCTP + H2O + H(+) = dUTP + NH4(+). Its pathway is pyrimidine metabolism; dUMP biosynthesis; dUMP from dCTP (dUTP route): step 1/2. Its function is as follows. Catalyzes the deamination of dCTP to dUTP. This is dCTP deaminase from Stenotrophomonas maltophilia (strain R551-3).